A 92-amino-acid chain; its full sequence is Toxin RelE3 (92 aa).

This sequence belongs to the RelE toxin family.

Toxic component of a type II toxin-antitoxin (TA) system. Its toxic effect is neutralized by coexpression with cognate antitoxin RelB3 but no other ParD or RelB antitoxin. The polypeptide is Toxin RelE3 (relE3) (Caulobacter vibrioides (strain ATCC 19089 / CIP 103742 / CB 15) (Caulobacter crescentus)).